Consider the following 153-residue polypeptide: Superoxide dismutase [Cu-Zn] (153 aa).

Cu cation-binding residues include His45, His47, and His62. Cys56 and Cys145 are disulfide-bonded. 4 residues coordinate Zn(2+): His62, His70, His79, and Asp82. His119 contributes to the Cu cation binding site.

Belongs to the Cu-Zn superoxide dismutase family. As to quaternary structure, homodimer. Cu cation serves as cofactor. It depends on Zn(2+) as a cofactor.

It is found in the cytoplasm. The enzyme catalyses 2 superoxide + 2 H(+) = H2O2 + O2. In terms of biological role, destroys radicals which are normally produced within the cells and which are toxic to biological systems. The polypeptide is Superoxide dismutase [Cu-Zn] (Sod) (Chymomyza amoena).